A 1009-amino-acid polypeptide reads, in one-letter code: Helicase-like transcription factor (1009 aa).

The residue at position 27 (Arg-27) is an Omega-N-methylarginine. A DNA-binding region spans residues 38–287 (EFQDVIPPDD…FSEKDRPENV (250 aa)). Residue Lys-112 forms a Glycyl lysine isopeptide (Lys-Gly) (interchain with G-Cter in SUMO2) linkage. Residue Tyr-195 is modified to Phosphotyrosine; by JAK2. Lys-211 participates in a covalent cross-link: Glycyl lysine isopeptide (Lys-Gly) (interchain with G-Cter in SUMO2). 294–301 (DDMGLGKT) contributes to the ATP binding site. Residues 336–365 (DDSMKLGGNNTSEKADGLSKDASRCSEQPS) form a disordered region. The segment covering 348-359 (EKADGLSKDASR) has biased composition (basic and acidic residues). Phosphoserine is present on residues Ser-397, Ser-398, and Ser-400. The Helicase ATP-binding domain occupies 435–606 (IEDVAFACAL…WSLLSFLKLK (172 aa)). A DEGH box motif is present at residues 557–560 (DEGH). The residue at position 736 (Thr-736) is a Phosphothreonine. The RING-type zinc-finger motif lies at 760 to 801 (CAICLDSLTVPVITHCAHVFCKPCICQVIQNEQPHAKCPLCR). The Helicase C-terminal domain maps to 837 to 996 (ALMHALTDLR…TKKPNADEMK (160 aa)). The interval 925–1009 (SRVFLMDPAW…INEIRTLIDL (85 aa)) is interaction with SP1 and SP3.

Belongs to the SNF2/RAD54 helicase family. RAD16 subfamily. As to quaternary structure, interacts with SP1 and SP3 independently of DNA; the interaction with these transcriptional factors may be required for basal transcription of target genes. Interacts with EGR1; the interaction requires prior binding to DNA and represses c-Rel via a DNA looping mechanism. Interacts with GATA4. Interacts with PCNA; the interaction promotes polyubiquitination of PCNA through association with the UBE2B-RAD18 and UBE2V2-UBE2N ubiquitin ligase complexes. Interacts with RAD18, SHPRH, UBE2V2 and UBE2N. In terms of tissue distribution, expressed in brain, heart, kidney, liver, lung, pancreas, placenta and skeletal muscle.

It is found in the cytoplasm. It localises to the nucleus. The protein localises to the nucleolus. Its subcellular location is the nucleoplasm. The enzyme catalyses S-ubiquitinyl-[E2 ubiquitin-conjugating enzyme]-L-cysteine + [acceptor protein]-L-lysine = [E2 ubiquitin-conjugating enzyme]-L-cysteine + N(6)-ubiquitinyl-[acceptor protein]-L-lysine.. It functions in the pathway protein modification; protein ubiquitination. In terms of biological role, has both helicase and E3 ubiquitin ligase activities. Possesses intrinsic ATP-dependent nucleosome-remodeling activity; This activity may be required for transcriptional activation or repression of specific target promoters. These may include the SERPINE1 and HIV-1 promoters and the SV40 enhancer, to which this protein can bind directly. Plays a role in error-free postreplication repair (PRR) of damaged DNA and maintains genomic stability through acting as a ubiquitin ligase for 'Lys-63'-linked polyubiquitination of chromatin-bound PCNA. This Homo sapiens (Human) protein is Helicase-like transcription factor (HLTF).